An 835-amino-acid chain; its full sequence is Invasin (835 aa).

Residues 451 to 541 (VITSEVTDDG…QQATVDVRFA (91 aa)) form the Big-1 domain.

This sequence belongs to the intimin/invasin family.

Its subcellular location is the cell outer membrane. Invasin is a protein that allows enteric bacteria to penetrate cultured mammalian cells. The entry of invasin in the cell is mediated by binding several beta-1 chain integrins. The protein is Invasin of Yersinia enterocolitica.